The chain runs to 336 residues: Fructose-1,6-bisphosphatase class 1 (336 aa).

Residues glutamate 90, aspartate 112, leucine 114, and aspartate 115 each contribute to the Mg(2+) site. Substrate-binding positions include 115–118, asparagine 211, and lysine 277; that span reads DGSS. Glutamate 283 contacts Mg(2+).

The protein belongs to the FBPase class 1 family. As to quaternary structure, homotetramer. Requires Mg(2+) as cofactor.

The protein localises to the cytoplasm. It carries out the reaction beta-D-fructose 1,6-bisphosphate + H2O = beta-D-fructose 6-phosphate + phosphate. The protein operates within carbohydrate biosynthesis; gluconeogenesis. In Pseudomonas fluorescens (strain ATCC BAA-477 / NRRL B-23932 / Pf-5), this protein is Fructose-1,6-bisphosphatase class 1.